Reading from the N-terminus, the 78-residue chain is Translational regulator CsrA (78 aa).

The protein belongs to the CsrA/RsmA family. As to quaternary structure, homodimer; the beta-strands of each monomer intercalate to form a hydrophobic core, while the alpha-helices form wings that extend away from the core.

Its subcellular location is the cytoplasm. Its function is as follows. A translational regulator that binds mRNA to regulate translation initiation and/or mRNA stability. Usually binds in the 5'-UTR at or near the Shine-Dalgarno sequence preventing ribosome-binding, thus repressing translation. Its main target seems to be the major flagellin gene, while its function is anatagonized by FliW. The sequence is that of Translational regulator CsrA from Geobacter metallireducens (strain ATCC 53774 / DSM 7210 / GS-15).